Reading from the N-terminus, the 420-residue chain is Glucose-1-phosphate adenylyltransferase (420 aa).

Alpha-D-glucose 1-phosphate is bound by residues tyrosine 107, glycine 173, 188 to 189, and serine 206; that span reads EK.

Belongs to the bacterial/plant glucose-1-phosphate adenylyltransferase family. Homotetramer.

The catalysed reaction is alpha-D-glucose 1-phosphate + ATP + H(+) = ADP-alpha-D-glucose + diphosphate. It functions in the pathway glycan biosynthesis; glycogen biosynthesis. Involved in the biosynthesis of ADP-glucose, a building block required for the elongation reactions to produce glycogen. Catalyzes the reaction between ATP and alpha-D-glucose 1-phosphate (G1P) to produce pyrophosphate and ADP-Glc. In Shewanella sp. (strain MR-4), this protein is Glucose-1-phosphate adenylyltransferase.